The sequence spans 67 residues: Small ribosomal subunit protein bS21 (67 aa).

Belongs to the bacterial ribosomal protein bS21 family.

This is Small ribosomal subunit protein bS21 from Rhodospirillum centenum (strain ATCC 51521 / SW).